A 1342-amino-acid polypeptide reads, in one-letter code: DNA-directed RNA polymerase subunit beta (1342 aa).

This sequence belongs to the RNA polymerase beta chain family. In terms of assembly, the RNAP catalytic core consists of 2 alpha, 1 beta, 1 beta' and 1 omega subunit. When a sigma factor is associated with the core the holoenzyme is formed, which can initiate transcription.

The enzyme catalyses RNA(n) + a ribonucleoside 5'-triphosphate = RNA(n+1) + diphosphate. DNA-dependent RNA polymerase catalyzes the transcription of DNA into RNA using the four ribonucleoside triphosphates as substrates. The chain is DNA-directed RNA polymerase subunit beta from Histophilus somni (strain 2336) (Haemophilus somnus).